The sequence spans 63 residues: Phylloseptin-Az1 (63 aa).

A signal peptide spans 1 to 19 (LKKSLFLVVFLGLATLSIC). Residues 20 to 41 (EEEKRETEEEEYNQGEDDKSEE) constitute a propeptide that is removed on maturation. At F62 the chain carries Phenylalanine amide.

As to expression, expressed by the skin glands.

The protein resides in the secreted. In terms of biological role, has antimicrobial activity. This is Phylloseptin-Az1 from Pithecopus azureus (Orange-legged monkey tree frog).